We begin with the raw amino-acid sequence, 787 residues long: Bifunctional dethiobiotin synthetase/adenosylmethionine-8-amino-7-oxononanoate aminotransferase (787 aa).

ATP is bound at residue 23 to 28; it reads DVGKTI. T27 provides a ligand contact to Mg(2+). T54 contacts substrate. Mg(2+) contacts are provided by D61 and E123. Residues 123-126 and 184-185 contribute to the ATP site; these read ETAG and KD. 323-324 contacts (8S)-8-amino-7-oxononanoate; sequence WW. Pyridoxal 5'-phosphate is bound at residue 384-385; that stretch reads GS. A (8S)-8-amino-7-oxononanoate-binding site is contributed by Y421. Pyridoxal 5'-phosphate is bound at residue D582. Positions 611 and 645 each coordinate (8S)-8-amino-7-oxononanoate. 646-647 is a pyridoxal 5'-phosphate binding site; it reads HS. R756 contacts (8S)-8-amino-7-oxononanoate.

In the N-terminal section; belongs to the dethiobiotin synthetase family. The protein in the C-terminal section; belongs to the class-III pyridoxal-phosphate-dependent aminotransferase family. BioA subfamily. Homodimer. It depends on Mg(2+) as a cofactor. The cofactor is pyridoxal 5'-phosphate.

It localises to the mitochondrion matrix. The enzyme catalyses (7R,8S)-7,8-diammoniononanoate + CO2 + ATP = (4R,5S)-dethiobiotin + ADP + phosphate + 3 H(+). The catalysed reaction is (8S)-8-amino-7-oxononanoate + S-adenosyl-L-methionine = S-adenosyl-4-methylsulfanyl-2-oxobutanoate + (7R,8S)-7,8-diammoniononanoate. It participates in cofactor biosynthesis; biotin biosynthesis; biotin from 7,8-diaminononanoate: step 1/2. The protein operates within cofactor biosynthesis; biotin biosynthesis; 7,8-diaminononanoate from 8-amino-7-oxononanoate (SAM route): step 1/1. Functionally, bifunctional enzyme; part of the cluster involved in the biosynthesis of biotin (also known as vitamin B8 or vitamin H), a water-soluble vitamin that functions as a prosthetic group of many carboxylases, such as acetyl-CoA carboxylase and pyruvate carboxylase. Catalyzes a mechanistically unusual reaction, the ATP-dependent insertion of CO2 between the N7 and N8 nitrogen atoms of 7,8-diaminopelargonic acid (DAPA) to form an ureido ring. Also catalyzes the transfer of the alpha-amino group from S-adenosyl-L-methionine (SAM) to 7-keto-8-aminopelargonic acid (KAPA) to form 7,8-diaminopelargonic acid (DAPA). It is the only animotransferase known to utilize SAM as an amino donor. This Emericella nidulans (strain FGSC A4 / ATCC 38163 / CBS 112.46 / NRRL 194 / M139) (Aspergillus nidulans) protein is Bifunctional dethiobiotin synthetase/adenosylmethionine-8-amino-7-oxononanoate aminotransferase.